The following is a 704-amino-acid chain: Ubiquitin-like modifier-activating enzyme atg7 (704 aa).

Positions 372–377 (GAGTLG) match the GXGXXG motif motif. C555 (glycyl thioester intermediate) is an active-site residue. Residues 660 to 699 (ALTEKDYITELSGLAEVQRKAEAAANDVEWDSDEEGMEDE) are homodimerization. The disordered stretch occupies residues 682 to 704 (AAANDVEWDSDEEGMEDEEPELL). Positions 687-704 (VEWDSDEEGMEDEEPELL) are enriched in acidic residues.

This sequence belongs to the ATG7 family. Homodimer. Interacts with ATG8 through a thioester bond between Cys-555 and the C-terminal Gly of ATG8 and with ATG12 through a thioester bond between Cys-555 and the C-terminal Gly of ATG12. Also interacts with ATG3.

The protein localises to the cytoplasm. It localises to the preautophagosomal structure. E1-like activating enzyme involved in the 2 ubiquitin-like systems required for cytoplasm to vacuole transport (Cvt) and autophagy. Activates ATG12 for its conjugation with ATG5 and ATG8 for its conjugation with phosphatidylethanolamine. Both systems are needed for the ATG8 association to Cvt vesicles and autophagosomes membranes. Autophagy is essential for maintenance of amino acid levels and protein synthesis under nitrogen starvation. Required for selective autophagic degradation of the nucleus (nucleophagy) as well as for mitophagy which contributes to regulate mitochondrial quantity and quality by eliminating the mitochondria to a basal level to fulfill cellular energy requirements and preventing excess ROS production. Required for normal mycelial growth and conidiogenesis, and regulates sclerotial formation. Plays an essential role in pathogenesis. The protein is Ubiquitin-like modifier-activating enzyme atg7 of Botryotinia fuckeliana (strain T4) (Noble rot fungus).